Reading from the N-terminus, the 881-residue chain is Alanine--tRNA ligase (881 aa).

Positions 563, 567, 672, and 676 each coordinate Zn(2+).

Belongs to the class-II aminoacyl-tRNA synthetase family. Requires Zn(2+) as cofactor.

It is found in the cytoplasm. It catalyses the reaction tRNA(Ala) + L-alanine + ATP = L-alanyl-tRNA(Ala) + AMP + diphosphate. Catalyzes the attachment of alanine to tRNA(Ala) in a two-step reaction: alanine is first activated by ATP to form Ala-AMP and then transferred to the acceptor end of tRNA(Ala). Also edits incorrectly charged Ser-tRNA(Ala) and Gly-tRNA(Ala) via its editing domain. In Azorhizobium caulinodans (strain ATCC 43989 / DSM 5975 / JCM 20966 / LMG 6465 / NBRC 14845 / NCIMB 13405 / ORS 571), this protein is Alanine--tRNA ligase.